The sequence spans 156 residues: Small ribosomal subunit protein uS7 (156 aa).

It belongs to the universal ribosomal protein uS7 family. As to quaternary structure, part of the 30S ribosomal subunit. Contacts proteins S9 and S11.

Its function is as follows. One of the primary rRNA binding proteins, it binds directly to 16S rRNA where it nucleates assembly of the head domain of the 30S subunit. Is located at the subunit interface close to the decoding center, probably blocks exit of the E-site tRNA. The protein is Small ribosomal subunit protein uS7 of Prochlorococcus marinus subsp. pastoris (strain CCMP1986 / NIES-2087 / MED4).